A 299-amino-acid polypeptide reads, in one-letter code: Mimecan (299 aa).

Positions 1 to 19 (MKTLQSTLLLFLFVPLIKP) are cleaved as a signal peptide. Asn89 carries an N-linked (GlcNAc...) (keratan sulfate) asparagine glycan. LRR repeat units lie at residues 113–132 (DAVP…FNKI), 133–156 (KKLT…GNLI), 157–180 (EDIE…ENQL), 181–200 (LKLP…YNKI), 201–226 (KSRG…HNAL), 227–247 (ESVP…FNNI), and 248–278 (TSIT…GNPV). An N-linked (GlcNAc...) (keratan sulfate) asparagine glycan is attached at Asn215. Asn246 is a glycosylation site (N-linked (GlcNAc...) asparagine). A disulfide bridge connects residues Cys256 and Cys289. An N-linked (GlcNAc...) (keratan sulfate) asparagine glycan is attached at Asn259.

This sequence belongs to the small leucine-rich proteoglycan (SLRP) family. SLRP class III subfamily. Post-translationally, contains keratan sulfate. Keratan sulfate attachment is observed in the cornea but the protein also exists in other tissues without keratan sulfate. In terms of processing, the 12 kDa OIF in bone and the 25 kDa KSPG25 protein in cornea are probably proteolytic fragments. In terms of tissue distribution, bone and cornea.

It localises to the secreted. The protein localises to the extracellular space. It is found in the extracellular matrix. Induces bone formation in conjunction with TGF-beta-1 or TGF-beta-2. This chain is Mimecan (OGN), found in Bos taurus (Bovine).